The primary structure comprises 371 residues: Phosphate acyltransferase (371 aa).

It belongs to the PlsX family. In terms of assembly, homodimer. Probably interacts with PlsY.

It is found in the cytoplasm. The enzyme catalyses a fatty acyl-[ACP] + phosphate = an acyl phosphate + holo-[ACP]. Its pathway is lipid metabolism; phospholipid metabolism. Its function is as follows. Catalyzes the reversible formation of acyl-phosphate (acyl-PO(4)) from acyl-[acyl-carrier-protein] (acyl-ACP). This enzyme utilizes acyl-ACP as fatty acyl donor, but not acyl-CoA. This is Phosphate acyltransferase from Ruegeria pomeroyi (strain ATCC 700808 / DSM 15171 / DSS-3) (Silicibacter pomeroyi).